A 228-amino-acid chain; its full sequence is Phosphoribosylformylglycinamidine synthase subunit PurQ (228 aa).

The region spanning Thr-2–Gly-228 is the Glutamine amidotransferase type-1 domain. Cys-88 functions as the Nucleophile in the catalytic mechanism. Active-site residues include His-205 and Glu-207.

In terms of assembly, part of the FGAM synthase complex composed of 1 PurL, 1 PurQ and 2 PurS subunits.

It localises to the cytoplasm. The catalysed reaction is N(2)-formyl-N(1)-(5-phospho-beta-D-ribosyl)glycinamide + L-glutamine + ATP + H2O = 2-formamido-N(1)-(5-O-phospho-beta-D-ribosyl)acetamidine + L-glutamate + ADP + phosphate + H(+). The enzyme catalyses L-glutamine + H2O = L-glutamate + NH4(+). It participates in purine metabolism; IMP biosynthesis via de novo pathway; 5-amino-1-(5-phospho-D-ribosyl)imidazole from N(2)-formyl-N(1)-(5-phospho-D-ribosyl)glycinamide: step 1/2. Functionally, part of the phosphoribosylformylglycinamidine synthase complex involved in the purines biosynthetic pathway. Catalyzes the ATP-dependent conversion of formylglycinamide ribonucleotide (FGAR) and glutamine to yield formylglycinamidine ribonucleotide (FGAM) and glutamate. The FGAM synthase complex is composed of three subunits. PurQ produces an ammonia molecule by converting glutamine to glutamate. PurL transfers the ammonia molecule to FGAR to form FGAM in an ATP-dependent manner. PurS interacts with PurQ and PurL and is thought to assist in the transfer of the ammonia molecule from PurQ to PurL. This Haloquadratum walsbyi (strain DSM 16790 / HBSQ001) protein is Phosphoribosylformylglycinamidine synthase subunit PurQ.